The sequence spans 33 residues: RNA-directed RNA polymerase beta chain (33 aa).

As to quaternary structure, the polymerase complex is composed of four chains, the three other proteins of the complex (alpha, gamma, and delta chains) are supplied by the host cell.

The catalysed reaction is RNA(n) + a ribonucleoside 5'-triphosphate = RNA(n+1) + diphosphate. This enzyme is part of the viral RNA-dependent RNA polymerase complex. The polypeptide is RNA-directed RNA polymerase beta chain (Escherichia phage BZ13 (Bacteriophage BZ13)).